Reading from the N-terminus, the 941-residue chain is Protocadherin alpha-12 (941 aa).

Residues 1 to 29 (MVIIGPRGPGSQRLLLSLLLLAAWEVGSG) form the signal peptide. 6 consecutive Cadherin domains span residues 30 to 133 (QLHY…PPVF), 134 to 242 (RERE…GPAF), 243 to 350 (DKPS…VPEV), 351 to 455 (MVTS…APAF), 456 to 565 (AQPE…APAL), and 581 to 678 (VPRS…APKT). Topologically, residues 30–697 (QLHYSVYEEA…DPEAALVDIN (668 aa)) are extracellular. N-linked (GlcNAc...) asparagine glycans are attached at residues N257 and N265. N-linked (GlcNAc...) asparagine glycosylation is present at N548. The helical transmembrane segment at 698 to 718 (VYLIIAICAVSSLLVLTLLLY) threads the bilayer. Topologically, residues 719–941 (TALRCSAPPT…GNSTTDNSDQ (223 aa)) are cytoplasmic. PXXP repeat units lie at residues 734-737 (PGKP), 790-793 (PRQP), 823-826 (PGGP), 863-866 (GPGN), and 882-885 (PGSP). The 5 X 4 AA repeats of P-X-X-P stretch occupies residues 734–885 (PGKPTLVCSS…PDKFIIPGSP (152 aa)). The disordered stretch occupies residues 818–941 (ILRAGPGGPD…GNSTTDNSDQ (124 aa)). The span at 900–914 (DKSDFITFGKKEETK) shows a compositional bias: basic and acidic residues.

The protein localises to the cell membrane. In terms of biological role, potential calcium-dependent cell-adhesion protein. May be involved in the establishment and maintenance of specific neuronal connections in the brain. The protein is Protocadherin alpha-12 (PCDHA12) of Pan troglodytes (Chimpanzee).